The chain runs to 2629 residues: Telomerase protein component 1 (2629 aa).

TEP1 N-terminal repeat units lie at residues Met1–Pro30, Leu31–Pro60, Thr61–Pro90, and Leu91–Ser120. The region spanning Leu227–Gly685 is the TROVE domain. Positions Pro386–Gln397 are enriched in basic residues. Residues Pro386–Gly412 are disordered. Positions Gln402–Gly412 are enriched in basic and acidic residues. The NACHT domain maps to Arg1171–Ala1578. Position 1177–1184 (Gly1177–Thr1184) interacts with ATP. 21 WD repeats span residues Val1420–Ala1462, Thr1681–Ala1720, Ser1723–Gln1761, Ala1764–Gln1803, Thr1805–Glu1844, Ala1847–Ala1886, Ala1889–Gly1930, Leu1932–Gln1971, Glu1974–Trp2013, Leu2015–Val2054, Gly2067–Leu2106, Cys2113–Gln2151, Gly2154–Ile2191, Ala2193–Thr2241, Gly2244–Tyr2282, Arg2285–Gln2324, Pro2326–Ser2362, Glu2375–Leu2424, Pro2467–Ile2507, Ile2555–Leu2592, and Arg2594–Trp2628.

In terms of assembly, associated component of the telomerase holoenzyme complex. Component of the vault ribonucleoprotein particle, at least composed of MVP, PARP4 and one or more vault RNAs (vRNAs). Binds to VAULTRC1, VAULTRC2 and VAULTRC4/hvg4 vRNAs. Ubiquitous.

It localises to the nucleus. Its subcellular location is the chromosome. The protein resides in the telomere. Its function is as follows. Component of the telomerase ribonucleoprotein complex that is essential for the replication of chromosome termini. Also a component of the ribonucleoprotein vaults particle, a multi-subunit structure involved in nucleo-cytoplasmic transport. Responsible for the localizing and stabilizing vault RNA (vRNA) association in the vault ribonucleoprotein particle. The chain is Telomerase protein component 1 (Tep1) from Mus musculus (Mouse).